A 447-amino-acid chain; its full sequence is N-succinylarginine dihydrolase (447 aa).

Substrate is bound by residues 19 to 28 (AGLSFGNEAS), Asn110, and 137 to 138 (HR). Residue Glu174 is part of the active site. Arg212 is a binding site for substrate. Residue His248 is part of the active site. The substrate site is built by Asp250 and Asn359. The active-site Nucleophile is Cys365.

This sequence belongs to the succinylarginine dihydrolase family. Homodimer.

The catalysed reaction is N(2)-succinyl-L-arginine + 2 H2O + 2 H(+) = N(2)-succinyl-L-ornithine + 2 NH4(+) + CO2. The protein operates within amino-acid degradation; L-arginine degradation via AST pathway; L-glutamate and succinate from L-arginine: step 2/5. Functionally, catalyzes the hydrolysis of N(2)-succinylarginine into N(2)-succinylornithine, ammonia and CO(2). The polypeptide is N-succinylarginine dihydrolase (Salmonella heidelberg (strain SL476)).